Reading from the N-terminus, the 131-residue chain is C-glycoside deglycosidase beta subunit (131 aa).

It belongs to the C-glycoside deglycosidase beta subunit family. In terms of assembly, heterodimer composed of an alpha subunit (CarB) and a beta subunit (CarC). The cofactor is a divalent metal cation.

It catalyses the reaction 3''-dehydroisovitexin = 1,5-anhydro-D-erythro-hex-1-en-3-ulose + apigenin. The catalysed reaction is 3''-dehydroisoorientin = 1,5-anhydro-D-erythro-hex-1-en-3-ulose + luteolin. In terms of biological role, carbon-carbon bond-cleaving enzyme which participates in the metabolism of C-glycosides. Acts on the C6-glycosylated compounds 3''-dehydroisovitexin (3''-oxo-isovitexin) and 3''-dehydroisoorientin (3''-oxo-homoorientin). Shows weak activity with 3'-dehydromangiferin (3'-oxo-mangiferin). The polypeptide is C-glycoside deglycosidase beta subunit (Microbacterium trichothecenolyticum (Aureobacterium trichothecenolyticum)).